Consider the following 328-residue polypeptide: Nucleotide-binding protein BL0705 (328 aa).

The disordered stretch occupies residues 1-35; the sequence is MNQQTTNRDTGEAAATNAPANSATSTSTPDNQPTP. Residues 13 to 29 show a composition bias toward low complexity; it reads AAATNAPANSATSTSTP. 46–53 lines the ATP pocket; sequence GMSGAGRS. A GTP-binding site is contributed by 101-104; it reads DVRS.

The protein belongs to the RapZ-like family.

In terms of biological role, displays ATPase and GTPase activities. The chain is Nucleotide-binding protein BL0705 from Bifidobacterium longum (strain NCC 2705).